A 740-amino-acid polypeptide reads, in one-letter code: Ion-translocating oxidoreductase complex subunit C (740 aa).

4Fe-4S ferredoxin-type domains follow at residues 369–397 (GEPQ…QQLY) and 407–436 (KATT…VQYF). Residues Cys377, Cys380, Cys383, Cys387, Cys416, Cys419, Cys422, and Cys426 each coordinate [4Fe-4S] cluster. 3 disordered regions span residues 602–652 (KLEQ…DPRK), 664–685 (ARKL…PRKA), and 695–714 (KARK…QVDP). Low complexity predominate over residues 605–615 (QQQANAEPEQQ).

This sequence belongs to the 4Fe4S bacterial-type ferredoxin family. RnfC subfamily. In terms of assembly, the complex is composed of six subunits: RsxA, RsxB, RsxC, RsxD, RsxE and RsxG. The cofactor is [4Fe-4S] cluster.

The protein localises to the cell inner membrane. Its function is as follows. Part of a membrane-bound complex that couples electron transfer with translocation of ions across the membrane. Required to maintain the reduced state of SoxR. This Escherichia coli O157:H7 protein is Ion-translocating oxidoreductase complex subunit C.